A 67-amino-acid chain; its full sequence is Large ribosomal subunit protein uL29 (67 aa).

This sequence belongs to the universal ribosomal protein uL29 family.

In Exiguobacterium sp. (strain ATCC BAA-1283 / AT1b), this protein is Large ribosomal subunit protein uL29.